We begin with the raw amino-acid sequence, 87 residues long: Acyl-CoA-binding protein (87 aa).

N-acetylserine is present on serine 2. Positions 2-87 constitute an ACB domain; it reads SQAEFEKAAE…VEELKQKYGI (86 aa). Lysine 8 carries the post-translational modification N6-acetyllysine; alternate. Position 8 is an N6-succinyllysine; alternate (lysine 8). Lysine 14 provides a ligand contact to an acyl-CoA. At lysine 17 the chain carries N6-succinyllysine. N6-acetyllysine is present on lysine 19. Phosphotyrosine is present on tyrosine 29. An acyl-CoA contacts are provided by residues 29–33, lysine 51, lysine 55, and tyrosine 74; that span reads YSHYK. N6-acetyllysine is present on lysine 51. Lysine 55 carries the post-translational modification N6-acetyllysine; alternate. At lysine 55 the chain carries N6-succinyllysine; alternate. The residue at position 55 (lysine 55) is an N6-(2-hydroxyisobutyryl)lysine; alternate. Lysine 55 bears the N6-malonyllysine; alternate mark. The residue at position 77 (lysine 77) is an N6-acetyllysine; alternate. Position 77 is an N6-succinyllysine; alternate (lysine 77).

This sequence belongs to the ACBP family. In terms of assembly, monomer.

The protein resides in the endoplasmic reticulum. The protein localises to the golgi apparatus. Binds medium- and long-chain acyl-CoA esters with very high affinity and may function as an intracellular carrier of acyl-CoA esters. It is also able to displace diazepam from the benzodiazepine (BZD) recognition site located on the GABA type A receptor. It is therefore possible that this protein also acts as a neuropeptide to modulate the action of the GABA receptor. The chain is Acyl-CoA-binding protein (DBI) from Oryctolagus cuniculus (Rabbit).